The chain runs to 362 residues: NAD(P)H-quinone oxidoreductase subunit 1, chloroplastic (362 aa).

Helical transmembrane passes span 31–51, 99–119, 132–152, 178–198, 206–226, 268–288, 303–323, and 336–356; these read WVPLPILSLVIVATLGVLVIV, WLFTLGPAVVVIPIFLAYLVV, IGIFFWIAISSIAPIGLLMSG, LAICVLSVCLLADSLSTVDIV, ILTWNIWRQPIGFVAFLIAAL, LVSGCFVTVLYLGGWHGPFAI, AFLGITWTLLKTFLFLFAAIL, and LLDLGWKFLLPVSLGNLLLTA.

The protein belongs to the complex I subunit 1 family. In terms of assembly, NDH is composed of at least 16 different subunits, 5 of which are encoded in the nucleus.

The protein resides in the plastid. It is found in the chloroplast thylakoid membrane. The enzyme catalyses a plastoquinone + NADH + (n+1) H(+)(in) = a plastoquinol + NAD(+) + n H(+)(out). The catalysed reaction is a plastoquinone + NADPH + (n+1) H(+)(in) = a plastoquinol + NADP(+) + n H(+)(out). Its function is as follows. NDH shuttles electrons from NAD(P)H:plastoquinone, via FMN and iron-sulfur (Fe-S) centers, to quinones in the photosynthetic chain and possibly in a chloroplast respiratory chain. The immediate electron acceptor for the enzyme in this species is believed to be plastoquinone. Couples the redox reaction to proton translocation, and thus conserves the redox energy in a proton gradient. The chain is NAD(P)H-quinone oxidoreductase subunit 1, chloroplastic from Nephroselmis olivacea (Green alga).